Here is a 544-residue protein sequence, read N- to C-terminus: NADP-dependent malic enzyme (544 aa).

A disordered region spans residues 1–22; the sequence is MQNKPSFILRNPSANKGTGFNN. Polar residues predominate over residues 12–21; the sequence is PSANKGTGFN. The active-site Proton donor is the tyrosine 92. Arginine 145 provides a ligand contact to NAD(+). Lysine 163 acts as the Proton acceptor in catalysis. Residues glutamate 234, aspartate 235, and aspartate 258 each contribute to the a divalent metal cation site. Aspartate 258 is an NAD(+) binding site. 287–303 lines the NADP(+) pocket; the sequence is VFLGAGSAGIGVADCIM. Asparagine 400 provides a ligand contact to NAD(+).

The protein belongs to the malic enzymes family. As to quaternary structure, homotetramer. Mg(2+) is required as a cofactor. The cofactor is Mn(2+). In terms of tissue distribution, expressed in the fruiting body.

It is found in the cytoplasm. The catalysed reaction is (S)-malate + NADP(+) = pyruvate + CO2 + NADPH. It carries out the reaction oxaloacetate + H(+) = pyruvate + CO2. The protein is NADP-dependent malic enzyme (malA) of Dictyostelium discoideum (Social amoeba).